We begin with the raw amino-acid sequence, 867 residues long: Elongation factor 2 (867 aa).

Residues His-17–Val-368 enclose the tr-type G domain. A GTP-binding site is contributed by Ala-26 to Ser-33. Phosphothreonine occurs at positions 57 and 59. GTP contacts are provided by residues Asn-176–Asp-179 and Ser-231–Leu-233. Position 723 is a diphthamide (His-723).

It belongs to the TRAFAC class translation factor GTPase superfamily. Classic translation factor GTPase family. EF-G/EF-2 subfamily. Post-translationally, phosphorylation by EF-2 kinase completely inactivates EF-2.

The protein resides in the cytoplasm. The catalysed reaction is GTP + H2O = GDP + phosphate + H(+). In terms of biological role, catalyzes the GTP-dependent ribosomal translocation step during translation elongation. During this step, the ribosome changes from the pre-translocational (PRE) to the post-translocational (POST) state as the newly formed A-site-bound peptidyl-tRNA and P-site-bound deacylated tRNA move to the P and E sites, respectively. Catalyzes the coordinated movement of the two tRNA molecules, the mRNA and conformational changes in the ribosome. This Blastocystis hominis protein is Elongation factor 2.